Consider the following 379-residue polypeptide: Proton extrusion protein PxcA (379 aa).

The next 4 helical transmembrane spans lie at 153–173 (TLVS…LQQI), 254–274 (AIKN…VCLF), 300–320 (FVII…GWTV), and 337–357 (FIDL…KYWI).

Belongs to the CemA family.

It localises to the cell inner membrane. In terms of biological role, required for H(+) efflux immediately after light irradiation to form a rapid H(+) concentration gradient across the thylakoid membranes. Together with PxcL, contributes to transient H(+) uptake following dark to light transition. The chain is Proton extrusion protein PxcA from Synechococcus sp. (strain RCC307).